The primary structure comprises 105 residues: Large ribosomal subunit protein uL24 (105 aa).

It belongs to the universal ribosomal protein uL24 family. In terms of assembly, part of the 50S ribosomal subunit.

In terms of biological role, one of two assembly initiator proteins, it binds directly to the 5'-end of the 23S rRNA, where it nucleates assembly of the 50S subunit. Its function is as follows. One of the proteins that surrounds the polypeptide exit tunnel on the outside of the subunit. The polypeptide is Large ribosomal subunit protein uL24 (Rhizorhabdus wittichii (strain DSM 6014 / CCUG 31198 / JCM 15750 / NBRC 105917 / EY 4224 / RW1) (Sphingomonas wittichii)).